Reading from the N-terminus, the 1132-residue chain is Mis18-binding protein 1 (1132 aa).

Lysine 7 is covalently cross-linked (Glycyl lysine isopeptide (Lys-Gly) (interchain with G-Cter in SUMO2)). Serine 9 is modified (phosphoserine). Lysine 65 participates in a covalent cross-link: Glycyl lysine isopeptide (Lys-Gly) (interchain with G-Cter in SUMO2). A phosphoserine mark is found at serine 110, serine 131, serine 135, serine 172, and serine 192. The interval 123–154 (LRDKQEQPSRNSSLLEPQKSGNNETFTPNRVE) is disordered. A compositionally biased stretch (polar residues) spans 130–150 (PSRNSSLLEPQKSGNNETFTP). Glycyl lysine isopeptide (Lys-Gly) (interchain with G-Cter in SUMO2) cross-links involve residues lysine 211 and lysine 262. The residue at position 299 (serine 299) is a Phosphoserine. Positions 306–332 (SERTTEGTSQQKVKEGNGKTVPGETGL) are disordered. Position 365 is a phosphoserine (serine 365). The SANTA domain occupies 383 to 469 (VQLQEWMIKS…MFGFPENWKE (87 aa)). The disordered stretch occupies residues 482–518 (EKNREKTKQKQKTGRSVRDIRKSMKNDARENQTDTAQ). Residues 497–513 (SVRDIRKSMKNDARENQ) are compositionally biased toward basic and acidic residues. Residues lysine 534, lysine 612, lysine 639, and lysine 647 each participate in a glycyl lysine isopeptide (Lys-Gly) (interchain with G-Cter in SUMO2) cross-link. Threonine 653 carries the phosphothreonine modification. Glycyl lysine isopeptide (Lys-Gly) (interchain with G-Cter in SUMO2) cross-links involve residues lysine 727 and lysine 742. Positions 765–798 (HQSSPDLSSEESETEKEIKRKAEVKKTKAGNTKE) are disordered. Serine 772 and serine 773 each carry phosphoserine. The segment covering 779–790 (EKEIKRKAEVKK) has biased composition (basic and acidic residues). A Phosphothreonine modification is found at threonine 821. A Phosphoserine modification is found at serine 824. Lysine 840 is covalently cross-linked (Glycyl lysine isopeptide (Lys-Gly) (interchain with G-Cter in SUMO2)). Serine 860 carries the phosphoserine modification. The SANT domain occupies 875 to 930 (IQDKEWNEKELQKLHCAFASLPKHKPGFWSEVAAAVGSRSPEECQRKYMENPRGKG). Lysine 899 is covalently cross-linked (Glycyl lysine isopeptide (Lys-Gly) (interchain with G-Cter in SUMO2)). The segment at 923–957 (MENPRGKGSQKHVTKKKPANSKGQNGKRGDADQKQ) is disordered. Positions 930 to 941 (GSQKHVTKKKPA) are enriched in basic residues. Glycyl lysine isopeptide (Lys-Gly) (interchain with G-Cter in SUMO2) cross-links involve residues lysine 956, lysine 964, and lysine 983. Position 1008 is a phosphoserine (serine 1008). Lysine 1079 is covalently cross-linked (Glycyl lysine isopeptide (Lys-Gly) (interchain with G-Cter in SUMO2)). At serine 1086 the chain carries Phosphoserine. 2 positions are modified to phosphothreonine: threonine 1087 and threonine 1089. 2 positions are modified to phosphoserine: serine 1104 and serine 1116.

In terms of assembly, interacts with SP1. Interacts with MIS18A. Identified in a complex containing MIS18A, OIP5/MIS18B, MIS18BP1, RBBP7 and RBBP4. Interacts with KAT7/HBO1. Interacts (via N-terminus) with FLNA (via N-terminus).

It localises to the nucleus. The protein resides in the chromosome. The protein localises to the centromere. Functionally, required for recruitment of CENPA to centromeres and normal chromosome segregation during mitosis. This Homo sapiens (Human) protein is Mis18-binding protein 1 (MIS18BP1).